Consider the following 250-residue polypeptide: Small ribosomal subunit protein uS2 (250 aa).

This sequence belongs to the universal ribosomal protein uS2 family.

This chain is Small ribosomal subunit protein uS2, found in Marinobacter nauticus (strain ATCC 700491 / DSM 11845 / VT8) (Marinobacter aquaeolei).